A 489-amino-acid chain; its full sequence is Ubiquitin-like-specific protease ESD4 (489 aa).

Residues 43 to 66 (AMSEDSGKPASSNPTISRISRYPD) form a disordered region. Residues 51–60 (PASSNPTISR) show a composition bias toward polar residues. A coiled-coil region spans residues 200–223 (ASSLEAYRKLMQSAEKRNSKLEAL). Active-site residues include H380, D397, and C448.

Belongs to the peptidase C48 family. In terms of assembly, interacts with NUA (via N-terminus). Interacts with KIN10. Expressed in seedlings, leaves, shoots, flowers and roots.

It is found in the nucleus membrane. It carries out the reaction Hydrolysis of the alpha-linked peptide bond in the sequence Gly-Gly-|-Ala-Thr-Tyr at the C-terminal end of the small ubiquitin-like modifier (SUMO) propeptide, Smt3, leading to the mature form of the protein. A second reaction involves the cleavage of an epsilon-linked peptide bond between the C-terminal glycine of the mature SUMO and the lysine epsilon-amino group of the target protein.. With respect to regulation, inhibited by thiol reagent and N-ethylmaleimide, but not by ubiquitin aldehyde, pepstatin A or benzamidine HCl. Its function is as follows. Protease that catalyzes two essential functions in the SUMO pathway: processing of full-length SUMOs to their mature forms and deconjugation of SUMO from targeted proteins. Cleaves precursors of SUM1 and SUM2, but not of SUM3 or SUM5. Able to release SUM1 and SUM2 from conjugates, but unable to cleave SUM3. Acts predominantly as an isopeptidase, cleaving SUMO-conjugated proteins better than SUMO peptides. Plays an important role in the control of flowering time. The polypeptide is Ubiquitin-like-specific protease ESD4 (ESD4) (Arabidopsis thaliana (Mouse-ear cress)).